Consider the following 86-residue polypeptide: MTEGRRRQFKVGRVVSNKMQKTVVVAVDYLKPHPLYRKIVRRTSKFHAHDEQQCQIGDVVRIGETRPLSKTKRWEVVEIIKRNEEA.

It belongs to the universal ribosomal protein uS17 family. In terms of assembly, part of the 30S ribosomal subunit.

Functionally, one of the primary rRNA binding proteins, it binds specifically to the 5'-end of 16S ribosomal RNA. The polypeptide is Small ribosomal subunit protein uS17 (Roseiflexus castenholzii (strain DSM 13941 / HLO8)).